A 253-amino-acid polypeptide reads, in one-letter code: tRNA-cytidine(32) 2-sulfurtransferase 2 (253 aa).

Positions 33–38 (SGGKDS) match the PP-loop motif motif. [4Fe-4S] cluster-binding residues include Cys108, Cys111, and Cys199.

This sequence belongs to the TtcA family. As to quaternary structure, homodimer. Requires Mg(2+) as cofactor. It depends on [4Fe-4S] cluster as a cofactor.

It localises to the cytoplasm. It carries out the reaction cytidine(32) in tRNA + S-sulfanyl-L-cysteinyl-[cysteine desulfurase] + AH2 + ATP = 2-thiocytidine(32) in tRNA + L-cysteinyl-[cysteine desulfurase] + A + AMP + diphosphate + H(+). It functions in the pathway tRNA modification. Catalyzes the ATP-dependent 2-thiolation of cytidine in position 32 of tRNA, to form 2-thiocytidine (s(2)C32). The sulfur atoms are provided by the cysteine/cysteine desulfurase (IscS) system. This chain is tRNA-cytidine(32) 2-sulfurtransferase 2, found in Francisella tularensis subsp. novicida (strain U112).